Consider the following 104-residue polypeptide: MSSVPASAYLTLAIILFCIGLFGALTKRNTVIVLVCIELMLNAVNLNLVAFSKLGLFPNVTGQIFSLFTMAVAAAEAAVGLAILIALYRNRTTVHVDEMDTLKG.

Transmembrane regions (helical) follow at residues 4-24 (VPAS…LFGA), 31-51 (VIVL…LVAF), and 67-87 (LFTM…LIAL).

It belongs to the complex I subunit 4L family. In terms of assembly, NDH-1 is composed of 14 different subunits. Subunits NuoA, H, J, K, L, M, N constitute the membrane sector of the complex.

It localises to the cell membrane. The catalysed reaction is a quinone + NADH + 5 H(+)(in) = a quinol + NAD(+) + 4 H(+)(out). Its function is as follows. NDH-1 shuttles electrons from NADH, via FMN and iron-sulfur (Fe-S) centers, to quinones in the respiratory chain. The immediate electron acceptor for the enzyme in this species is believed to be a menaquinone. Couples the redox reaction to proton translocation (for every two electrons transferred, four hydrogen ions are translocated across the cytoplasmic membrane), and thus conserves the redox energy in a proton gradient. This chain is NADH-quinone oxidoreductase subunit K, found in Bacillus cereus (strain AH187).